The chain runs to 248 residues: Pyridoxine 5'-phosphate synthase (248 aa).

Position 12 (Asn12) interacts with 3-amino-2-oxopropyl phosphate. 14–15 is a 1-deoxy-D-xylulose 5-phosphate binding site; it reads DH. 3-amino-2-oxopropyl phosphate is bound at residue Arg23. The active-site Proton acceptor is His48. Residues Arg50 and His55 each contribute to the 1-deoxy-D-xylulose 5-phosphate site. Glu75 (proton acceptor) is an active-site residue. Residue Thr105 participates in 1-deoxy-D-xylulose 5-phosphate binding. Catalysis depends on His196, which acts as the Proton donor. 3-amino-2-oxopropyl phosphate contacts are provided by residues Gly197 and 218–219; that span reads GH.

It belongs to the PNP synthase family. In terms of assembly, homooctamer; tetramer of dimers.

The protein resides in the cytoplasm. It carries out the reaction 3-amino-2-oxopropyl phosphate + 1-deoxy-D-xylulose 5-phosphate = pyridoxine 5'-phosphate + phosphate + 2 H2O + H(+). It functions in the pathway cofactor biosynthesis; pyridoxine 5'-phosphate biosynthesis; pyridoxine 5'-phosphate from D-erythrose 4-phosphate: step 5/5. Catalyzes the complicated ring closure reaction between the two acyclic compounds 1-deoxy-D-xylulose-5-phosphate (DXP) and 3-amino-2-oxopropyl phosphate (1-amino-acetone-3-phosphate or AAP) to form pyridoxine 5'-phosphate (PNP) and inorganic phosphate. In Ectopseudomonas mendocina (strain ymp) (Pseudomonas mendocina), this protein is Pyridoxine 5'-phosphate synthase.